The primary structure comprises 89 residues: Small ribosomal subunit protein uS15 (89 aa).

It belongs to the universal ribosomal protein uS15 family. Part of the 30S ribosomal subunit. Forms a bridge to the 50S subunit in the 70S ribosome, contacting the 23S rRNA.

One of the primary rRNA binding proteins, it binds directly to 16S rRNA where it helps nucleate assembly of the platform of the 30S subunit by binding and bridging several RNA helices of the 16S rRNA. Functionally, forms an intersubunit bridge (bridge B4) with the 23S rRNA of the 50S subunit in the ribosome. The sequence is that of Small ribosomal subunit protein uS15 from Dictyoglomus thermophilum (strain ATCC 35947 / DSM 3960 / H-6-12).